An 81-amino-acid chain; its full sequence is Acyl carrier protein (81 aa).

Residues A2–Q80 enclose the Carrier domain. O-(pantetheine 4'-phosphoryl)serine is present on S40.

The protein belongs to the acyl carrier protein (ACP) family. In terms of processing, 4'-phosphopantetheine is transferred from CoA to a specific serine of apo-ACP by AcpS. This modification is essential for activity because fatty acids are bound in thioester linkage to the sulfhydryl of the prosthetic group.

Its subcellular location is the cytoplasm. It functions in the pathway lipid metabolism; fatty acid biosynthesis. In terms of biological role, carrier of the growing fatty acid chain in fatty acid biosynthesis. The polypeptide is Acyl carrier protein (Micrococcus luteus (strain ATCC 4698 / DSM 20030 / JCM 1464 / CCM 169 / CCUG 5858 / IAM 1056 / NBRC 3333 / NCIMB 9278 / NCTC 2665 / VKM Ac-2230) (Micrococcus lysodeikticus)).